The chain runs to 168 residues: Small ribosomal subunit protein uS8 (168 aa).

Positions 59-93 (EEYKKMKELAEKSPNPKMKRYLKQLEEYNKGTQYP) are not found in other S8 sequences.

Belongs to the universal ribosomal protein uS8 family. In terms of assembly, part of the 30S ribosomal subunit. Contacts proteins S5 and S12.

In terms of biological role, one of the primary rRNA binding proteins, it binds directly to 16S rRNA central domain where it helps coordinate assembly of the platform of the 30S subunit. This chain is Small ribosomal subunit protein uS8, found in Aquifex aeolicus (strain VF5).